Consider the following 870-residue polypeptide: MKTNKKDEETGGNVYAHLDKTSVLQEARAFNETPINARKCCFILSKLIYIIQQGESIGRTEATEAFFGVTKLWQSKDVSLRRMVYLAVKELAEVSDDVIIVTSSLTKDMTGREDLYRAAAIRALCKITDTGMLQTIERYMKQAIVDRNSAISSSAIVSSIHLMRKSSEVVRRWANEVQEAVSSDNHMVQYHALALLYQIRANDRLAVNKLVQKFSKNALRSPYAVCYLIRIATRCLVDDDQPDSSVFTFIESCLRHKSEMVVYEAARAIVSLPQTTPSEIQPAITALQMCCTSPKAAVRFAAVRTLNKVAMAHPNAVMSCNVDLEKFITDPNRSIATLAITTLLKTGAESSVERLMQQIAGFVNEISDEFKIVVVDAIRSLCSRYPRKHTVMMPFLAKMLRSDGSYDYKKAIVETIIAIIEENPDAKVAGLAHLCEFIEDCEHDNLSTRVLHLLGREAPKTPNPSSYIRFIYNRVILESTKVRAAAVTALAKFGAQCVDLRPSIQVLLKRCLLDSDDEVRDRATFYLKMLTEAAEGLIHNFILDGLQVSPSGLERSILDYLRSGSYSSPFDLRVVPVTQQALSQPEKRVPQLVEEEEKPKAPKVEPYAAQLAAIPQFAALGPVFKSSTRIALTESIAEYTVHMIKHTFANAMVLQFECKNTMNDQLLLDVSVELEDPDGEWETGNTVQIDKLPYGEVHSAFSLLEFPDSGAISGSLGAILKFKVMDVDPTSGEPDSDDTYEQTYVLEEVDVNVSDSVQGVAKSSFGSAWEALGDDATREETFQLSTVENIPDAVKKISEILGLVPCERSDRVPEGKTQHTVFLSGVFRGGYDVLSKATVAVDPNDNSIAMNIIIKSNEPLVADLVISAVV.

6 HEAT repeats span residues Thr-60–Asp-97, Ile-99–Leu-133, Glu-168–Leu-205, Ser-278–Asn-315, Ala-316–Ser-350, and His-389–Asp-425.

Belongs to the COPG family. In terms of assembly, oligomeric complex that consists of at least the alpha, beta, beta', gamma, delta, epsilon and zeta subunits.

The protein resides in the cytoplasm. Its subcellular location is the golgi apparatus membrane. It is found in the cytoplasmic vesicle. It localises to the COPI-coated vesicle membrane. In terms of biological role, the coatomer is a cytosolic protein complex that binds to dilysine motifs and reversibly associates with Golgi non-clathrin-coated vesicles, which further mediate biosynthetic protein transport from the ER, via the Golgi up to the trans Golgi network. Coatomer complex is required for budding from Golgi membranes, and is essential for the retrograde Golgi-to-ER transport of dilysine-tagged proteins. This chain is Probable coatomer subunit gamma, found in Caenorhabditis elegans.